Consider the following 249-residue polypeptide: 3alpha-hydroxy bile acid-CoA-ester 3-dehydrogenase 2 (249 aa).

NAD(+) contacts are provided by residues 15-18 (TRGI), Glu38, Glu42, and Asn92. Substrate is bound at residue Ser144. Catalysis depends on proton donor/acceptor residues Tyr157 and Lys161. NAD(+) is bound by residues Lys161 and 190 to 192 (VNT).

It belongs to the short-chain dehydrogenases/reductases (SDR) family. Homotetramer.

The catalysed reaction is a 3alpha-hydroxy bile acid CoA + NAD(+) = a 3-oxo bile acid CoA + NADH + H(+). The enzyme catalyses choloyl-CoA + NAD(+) = 7alpha,12alpha-dihydroxy-3-oxochol-24-oyl-CoA + NADH + H(+). It catalyses the reaction chenodeoxycholoyl-CoA + NAD(+) = 7alpha-hydroxy-3-oxochol-24-oyl-CoA + NADH + H(+). It carries out the reaction deoxycholoyl-CoA + NAD(+) = 12alpha-hydroxy-3-oxocholan-24-oyl-CoA + NADH + H(+). The catalysed reaction is lithocholoyl-CoA + NAD(+) = 3-oxocholan-24-oyl-CoA + NADH + H(+). It functions in the pathway lipid metabolism; bile acid biosynthesis. Functionally, involved in the multi-step bile acid 7alpha-dehydroxylation pathway that transforms primary bile acids to secondary bile acids in the human gut. Catalyzes the oxidation of C3-hydroxyl group of CoA conjugated bile acids generating a C3-oxo bile acid intermediate. Can use choloyl-CoA, chenodeoxycholoyl-CoA, deoxycholoyl-CoA, and lithocholoyl-CoA as substrates with similar efficiency. Highly prefers NAD over NADP as cosubstrate. Also catalyzes the reverse reactions; in vitro, the preferred direction of reaction depends on the pH. Has very little activity with unconjugated (non-CoA) bile acid substrates. This is 3alpha-hydroxy bile acid-CoA-ester 3-dehydrogenase 2 (baiA2) from Clostridium scindens (strain JCM 10418 / VPI 12708).